A 246-amino-acid chain; its full sequence is Triosephosphate isomerase (246 aa).

9–11 (NWK) lines the substrate pocket. His-99 acts as the Electrophile in catalysis. Glu-168 serves as the catalytic Proton acceptor. Substrate contacts are provided by residues Gly-174, Ser-207, and 228 to 229 (GG).

This sequence belongs to the triosephosphate isomerase family. Homodimer.

It localises to the cytoplasm. It catalyses the reaction D-glyceraldehyde 3-phosphate = dihydroxyacetone phosphate. Its pathway is carbohydrate biosynthesis; gluconeogenesis. It participates in carbohydrate degradation; glycolysis; D-glyceraldehyde 3-phosphate from glycerone phosphate: step 1/1. Involved in the gluconeogenesis. Catalyzes stereospecifically the conversion of dihydroxyacetone phosphate (DHAP) to D-glyceraldehyde-3-phosphate (G3P). The sequence is that of Triosephosphate isomerase from Prochlorococcus marinus (strain NATL1A).